Here is a 91-residue protein sequence, read N- to C-terminus: Non-specific lipid-transfer protein 1 (91 aa).

Intrachain disulfides connect Cys4–Cys51, Cys14–Cys28, Cys29–Cys74, and Cys49–Cys88.

In terms of tissue distribution, detected in seeds (at protein level).

Functionally, plant non-specific lipid-transfer proteins transfer phospholipids as well as galactolipids across membranes. May play a role in wax or cutin deposition in the cell walls of expanding epidermal cells and certain secretory tissues. The polypeptide is Non-specific lipid-transfer protein 1 (Trachyspermum ammi (Ajowan caraway)).